A 267-amino-acid chain; its full sequence is Ribosomal RNA large subunit methyltransferase E (267 aa).

Positions 50, 52, 68, 84, and 109 each coordinate S-adenosyl-L-methionine. The active-site Proton acceptor is K149. The region spanning 196–255 (PLKIDDKFDVTIKKIGAKGNGIAFVEDFVVFMQDEVKKGENVRIKIVDVKPEFAFAIVIG) is the TRAM domain.

The protein belongs to the class I-like SAM-binding methyltransferase superfamily. RNA methyltransferase RlmE family.

It localises to the cytoplasm. It catalyses the reaction uridine(2552) in 23S rRNA + S-adenosyl-L-methionine = 2'-O-methyluridine(2552) in 23S rRNA + S-adenosyl-L-homocysteine + H(+). Functionally, specifically methylates the uridine in position 2552 of 23S rRNA at the 2'-O position of the ribose in the fully assembled 50S ribosomal subunit. The polypeptide is Ribosomal RNA large subunit methyltransferase E (Methanococcoides burtonii (strain DSM 6242 / NBRC 107633 / OCM 468 / ACE-M)).